Reading from the N-terminus, the 256-residue chain is Thrombin-like enzyme cerastocytin (256 aa).

The signal sequence occupies residues 1 to 18 (MVLISVLASLLVLQLSYA). Positions 19–24 (QKSSEL) are excised as a propeptide. The Peptidase S1 domain maps to 25 to 247 (VIGGAECNIN…YTDWIRNIIA (223 aa)). 5 disulfide bridges follow: cysteine 31-cysteine 161, cysteine 98-cysteine 254, cysteine 140-cysteine 208, cysteine 172-cysteine 187, and cysteine 198-cysteine 223. N-linked (GlcNAc...) asparagine glycosylation is present at asparagine 44. Catalysis depends on charge relay system residues histidine 65 and aspartate 108. Residues asparagine 119, asparagine 120, and asparagine 152 are each glycosylated (N-linked (GlcNAc...) asparagine). Residue serine 202 is the Charge relay system of the active site.

This sequence belongs to the peptidase S1 family. Snake venom subfamily. Monomer. Expressed by the venom gland.

It localises to the secreted. Its activity is regulated as follows. Its platelets aggregating activity is inhibited by chlorpromazine, theophylline mepacrine. Its platelet aggregating activity and its amidolytic activity are inhibited by PMSF, TPCK, TLCK and soybean trypsin inhibitors. Is unaffected by hirudin or by antithrombin-III in the presence of heparin. Its function is as follows. Thrombin-like snake venom serine protease which potently induces platelet aggregation and has fibrinogenolytic activities. Clots purified fibrinogen and hydrolyzes alpha-chains (FGA). High concentrations of this enzyme also cleave prothrombin (F2) and factor X (F10). Is also able to activate factor XIII (F8). The protein is Thrombin-like enzyme cerastocytin of Cerastes cerastes (Horned desert viper).